We begin with the raw amino-acid sequence, 394 residues long: NAD(P)H-quinone oxidoreductase subunit H (394 aa).

It belongs to the complex I 49 kDa subunit family. As to quaternary structure, NDH-1 can be composed of about 15 different subunits; different subcomplexes with different compositions have been identified which probably have different functions.

Its subcellular location is the cellular thylakoid membrane. The enzyme catalyses a plastoquinone + NADH + (n+1) H(+)(in) = a plastoquinol + NAD(+) + n H(+)(out). It catalyses the reaction a plastoquinone + NADPH + (n+1) H(+)(in) = a plastoquinol + NADP(+) + n H(+)(out). NDH-1 shuttles electrons from an unknown electron donor, via FMN and iron-sulfur (Fe-S) centers, to quinones in the respiratory and/or the photosynthetic chain. The immediate electron acceptor for the enzyme in this species is believed to be plastoquinone. Couples the redox reaction to proton translocation, and thus conserves the redox energy in a proton gradient. Cyanobacterial NDH-1 also plays a role in inorganic carbon-concentration. The chain is NAD(P)H-quinone oxidoreductase subunit H from Synechococcus sp. (strain CC9902).